We begin with the raw amino-acid sequence, 226 residues long: uncharacterized protein (226 aa).

One can recognise a Response regulatory domain in the interval 1–112 (MLVEDDHSIS…ELTARVKAAI (112 aa)). A 4-aspartylphosphate modification is found at Asp48. A DNA-binding region (ompR/PhoB-type) is located at residues 126 to 225 (NKVIRIHQLA…LWGIGYKLGE (100 aa)).

In terms of processing, phosphorylated by YcbM.

The protein resides in the cytoplasm. Member of the two-component regulatory system YcbM/YcbL. This is an uncharacterized protein from Bacillus subtilis (strain 168).